The following is a 396-amino-acid chain: uncharacterized protein (396 aa).

11 helical membrane passes run 7-27, 36-56, 62-82, 94-114, 159-179, 218-238, 250-270, 285-305, 310-330, 340-360, and 367-387; these read SDDVWVLWGFIAVWAAVSIGL, AVSGAIIALAGAMVFTNVGVL, VYDTVWSYVVPLAIPLLLFQI, LLFIFLISSVGTVLGSILAFF, VVADNFMMALLFFILISIPAL, IAFNAGAAFALVAVSMKVSGY, GTLGDQYLVLTSLTVLIIFLF, TFLIYLFFVVIGIPADLRLIV, LILLFVFIIAISNLAVSLAAG, ILLAVNATVGGPTTAAAMAIA, and VAPIMLVGTLGYLIGNYVGTF.

The protein localises to the cell membrane. This is an uncharacterized protein from Bacillus subtilis (strain 168).